A 128-amino-acid polypeptide reads, in one-letter code: NADH-quinone oxidoreductase subunit A (128 aa).

The next 3 helical transmembrane spans lie at 5-25, 72-92, and 100-120; these read IPILVLAALAAAFAVVSVVIA, LTAMLFIVFDIEIVFLYPWAV, and FALVEMAIFMLTVFVAYAYVW.

This sequence belongs to the complex I subunit 3 family. In terms of assembly, NDH-1 is composed of 14 different subunits. Subunits NuoA, H, J, K, L, M, N constitute the membrane sector of the complex.

The protein localises to the cell membrane. The catalysed reaction is a quinone + NADH + 5 H(+)(in) = a quinol + NAD(+) + 4 H(+)(out). Its function is as follows. NDH-1 shuttles electrons from NADH, via FMN and iron-sulfur (Fe-S) centers, to quinones in the respiratory chain. The immediate electron acceptor for the enzyme in this species is believed to be a menaquinone. Couples the redox reaction to proton translocation (for every two electrons transferred, four hydrogen ions are translocated across the cytoplasmic membrane), and thus conserves the redox energy in a proton gradient. The polypeptide is NADH-quinone oxidoreductase subunit A (Mycobacterium bovis (strain ATCC BAA-935 / AF2122/97)).